The primary structure comprises 119 residues: Large ribosomal subunit protein bL12 (119 aa).

This sequence belongs to the bacterial ribosomal protein bL12 family. In terms of assembly, homodimer. Part of the ribosomal stalk of the 50S ribosomal subunit. Forms a multimeric L10(L12)X complex, where L10 forms an elongated spine to which 2 to 4 L12 dimers bind in a sequential fashion. Binds GTP-bound translation factors.

Forms part of the ribosomal stalk which helps the ribosome interact with GTP-bound translation factors. Is thus essential for accurate translation. The sequence is that of Large ribosomal subunit protein bL12 from Lysinibacillus sphaericus (strain C3-41).